Reading from the N-terminus, the 510-residue chain is Inositol-3-phosphate synthase isozyme 2 (510 aa).

This sequence belongs to the myo-inositol 1-phosphate synthase family. Requires NAD(+) as cofactor. Expressed in siliques, leaves, roots, seed endosperm, but not in embryos. Highest expression in seeds. In leaves, only expressed in hydathodes and vascular tissue.

It is found in the cytoplasm. It catalyses the reaction D-glucose 6-phosphate = 1D-myo-inositol 3-phosphate. Its pathway is polyol metabolism; myo-inositol biosynthesis; myo-inositol from D-glucose 6-phosphate: step 1/2. Functionally, key enzyme in myo-inositol biosynthesis pathway that catalyzes the conversion of glucose 6-phosphate to 1-myo-inositol 1-phosphate in a NAD-dependent manner. The polypeptide is Inositol-3-phosphate synthase isozyme 2 (IPS2) (Arabidopsis thaliana (Mouse-ear cress)).